The following is a 320-amino-acid chain: Cell division protein FtsQ (320 aa).

Residues Met-1–Lys-24 form a disordered region. Over Met-1–Arg-52 the chain is Cytoplasmic. Residues Ile-53 to Ala-73 traverse the membrane as a helical segment. At Gly-74–Gly-320 the chain is on the periplasmic side. The 69-residue stretch at Phe-92–Arg-160 folds into the POTRA domain. A disordered region spans residues Ala-296–Gly-320.

This sequence belongs to the FtsQ/DivIB family. FtsQ subfamily.

It localises to the cell inner membrane. Its function is as follows. Essential cell division protein. This is Cell division protein FtsQ from Novosphingobium aromaticivorans (strain ATCC 700278 / DSM 12444 / CCUG 56034 / CIP 105152 / NBRC 16084 / F199).